Here is a 360-residue protein sequence, read N- to C-terminus: Photosystem II protein D1 2 (360 aa).

3 helical membrane passes run 29-46 (YIGW…SATI), 118-133 (HFLI…EWEF), and 142-156 (WICV…AATA). Position 118 (His118) interacts with chlorophyll a. Tyr126 lines the pheophytin a pocket. [CaMn4O5] cluster-binding residues include Asp170 and Glu189. Residues 197–218 (LHMFGVAGVFGGSLFAAMHGSL) traverse the membrane as a helical segment. His198 lines the chlorophyll a pocket. A quinone contacts are provided by residues His215 and 264–265 (SF). Residue His215 coordinates Fe cation. His272 contacts Fe cation. The helical transmembrane segment at 274-288 (FLAAWPVIGIWLTSL) threads the bilayer. Residues His332, Glu333, Asp342, and Ala344 each coordinate [CaMn4O5] cluster. The propeptide occupies 345 to 360 (GTESAPVAFAAALGDG).

This sequence belongs to the reaction center PufL/M/PsbA/D family. PSII is composed of 1 copy each of membrane proteins PsbA, PsbB, PsbC, PsbD, PsbE, PsbF, PsbH, PsbI, PsbJ, PsbK, PsbL, PsbM, PsbT, PsbX, Psb30/Ycf12, peripheral proteins PsbO, CyanoQ (PsbQ), PsbU, PsbV and a large number of cofactors. It forms dimeric complexes. Requires The D1/D2 heterodimer binds P680, chlorophylls that are the primary electron donor of PSII, and subsequent electron acceptors. It shares a non-heme iron and each subunit binds pheophytin, quinone, additional chlorophylls, carotenoids and lipids. D1 provides most of the ligands for the Mn4-Ca-O5 cluster of the oxygen-evolving complex (OEC). There is also a Cl(-1) ion associated with D1 and D2, which is required for oxygen evolution. The PSII complex binds additional chlorophylls, carotenoids and specific lipids. as cofactor. Tyr-161 forms a radical intermediate that is referred to as redox-active TyrZ, YZ or Y-Z. In terms of processing, C-terminally processed by CtpA; processing is essential to allow assembly of the oxygen-evolving complex and thus photosynthetic growth.

Its subcellular location is the cell inner membrane. The enzyme catalyses 2 a plastoquinone + 4 hnu + 2 H2O = 2 a plastoquinol + O2. Its function is as follows. Photosystem II (PSII) is a light-driven water:plastoquinone oxidoreductase that uses light energy to abstract electrons from H(2)O, generating O(2) and a proton gradient subsequently used for ATP formation. It consists of a core antenna complex that captures photons, and an electron transfer chain that converts photonic excitation into a charge separation. The D1/D2 (PsbA/PsbD) reaction center heterodimer binds P680, the primary electron donor of PSII as well as several subsequent electron acceptors. This Gloeobacter violaceus (strain ATCC 29082 / PCC 7421) protein is Photosystem II protein D1 2.